The chain runs to 291 residues: MEMO1 family protein PH1626 (291 aa).

The protein belongs to the MEMO1 family.

The polypeptide is MEMO1 family protein PH1626 (Pyrococcus horikoshii (strain ATCC 700860 / DSM 12428 / JCM 9974 / NBRC 100139 / OT-3)).